The following is a 213-amino-acid chain: Thymidylate kinase (213 aa).

Position 10–17 (glycine 10–threonine 17) interacts with ATP.

The protein belongs to the thymidylate kinase family.

The enzyme catalyses dTMP + ATP = dTDP + ADP. In terms of biological role, phosphorylation of dTMP to form dTDP in both de novo and salvage pathways of dTTP synthesis. This chain is Thymidylate kinase, found in Limosilactobacillus reuteri (strain DSM 20016) (Lactobacillus reuteri).